A 419-amino-acid chain; its full sequence is Adenylosuccinate synthetase (419 aa).

Residues glycine 12–lysine 18 and glycine 40–threonine 42 contribute to the GTP site. Residue aspartate 13 is the Proton acceptor of the active site. Mg(2+) contacts are provided by aspartate 13 and glycine 40. Residues aspartate 13–lysine 16, asparagine 38–histidine 41, threonine 128, arginine 142, glutamine 220, threonine 235, and arginine 299 contribute to the IMP site. Residue histidine 41 is the Proton donor of the active site. Substrate is bound at residue serine 295 to arginine 301. Residues arginine 301, lysine 327–aspartate 329, and serine 407–glycine 409 each bind GTP.

The protein belongs to the adenylosuccinate synthetase family. Homodimer. Mg(2+) serves as cofactor.

It localises to the cytoplasm. The enzyme catalyses IMP + L-aspartate + GTP = N(6)-(1,2-dicarboxyethyl)-AMP + GDP + phosphate + 2 H(+). It functions in the pathway purine metabolism; AMP biosynthesis via de novo pathway; AMP from IMP: step 1/2. Its function is as follows. Plays an important role in the de novo pathway of purine nucleotide biosynthesis. Catalyzes the first committed step in the biosynthesis of AMP from IMP. The chain is Adenylosuccinate synthetase from Azobacteroides pseudotrichonymphae genomovar. CFP2.